The sequence spans 86 residues: Large ribosomal subunit protein uL23 (86 aa).

This sequence belongs to the universal ribosomal protein uL23 family. Part of the 50S ribosomal subunit. Contacts protein L29.

Functionally, binds to 23S rRNA. One of the proteins that surrounds the polypeptide exit tunnel on the outside of the ribosome. The protein is Large ribosomal subunit protein uL23 of Pyrococcus abyssi (strain GE5 / Orsay).